A 208-amino-acid polypeptide reads, in one-letter code: Probable GTP-binding protein EngB (208 aa).

Positions 22–195 constitute an EngB-type G domain; sequence GLPEIALAGR…WHSIEEIFIA (174 aa). GTP is bound by residues 30-37, 57-61, 75-78, 142-145, and 174-176; these read GRSNVGKS, GKTRT, DLPG, TKSD, and ISS. Residues serine 37 and threonine 59 each contribute to the Mg(2+) site.

Belongs to the TRAFAC class TrmE-Era-EngA-EngB-Septin-like GTPase superfamily. EngB GTPase family. Mg(2+) serves as cofactor.

Its function is as follows. Necessary for normal cell division and for the maintenance of normal septation. The protein is Probable GTP-binding protein EngB of Alkaliphilus oremlandii (strain OhILAs) (Clostridium oremlandii (strain OhILAs)).